Consider the following 113-residue polypeptide: Phosphoribosyl-ATP pyrophosphatase (113 aa).

It belongs to the PRA-PH family.

It localises to the cytoplasm. The enzyme catalyses 1-(5-phospho-beta-D-ribosyl)-ATP + H2O = 1-(5-phospho-beta-D-ribosyl)-5'-AMP + diphosphate + H(+). It functions in the pathway amino-acid biosynthesis; L-histidine biosynthesis; L-histidine from 5-phospho-alpha-D-ribose 1-diphosphate: step 2/9. In Janthinobacterium sp. (strain Marseille) (Minibacterium massiliensis), this protein is Phosphoribosyl-ATP pyrophosphatase.